A 576-amino-acid polypeptide reads, in one-letter code: Arginine--tRNA ligase (576 aa).

The 'HIGH' region signature appears at 123 to 133; sequence PNIGKEMHVGH.

It belongs to the class-I aminoacyl-tRNA synthetase family. Monomer.

It localises to the cytoplasm. The catalysed reaction is tRNA(Arg) + L-arginine + ATP = L-arginyl-tRNA(Arg) + AMP + diphosphate. The sequence is that of Arginine--tRNA ligase from Wigglesworthia glossinidia brevipalpis.